An 872-amino-acid chain; its full sequence is Cyanophycin synthetase (872 aa).

Positions 224–480 constitute an ATP-grasp domain; the sequence is KTILQDAGVP…VAAPVMDMLF (257 aa). 495 to 501 provides a ligand contact to ATP; it reads GTNGKTT.

In the C-terminal section; belongs to the MurCDEF family. In terms of assembly, homodimer.

It carries out the reaction [L-4-(L-arginin-2-N-yl)aspartate](n) + L-aspartate + ATP = [L-4-(L-arginin-2-N-yl)aspartate](n)-L-aspartate + ADP + phosphate + H(+). The enzyme catalyses [L-4-(L-arginin-2-N-yl)aspartate](n)-L-aspartate + L-arginine + ATP = [L-4-(L-arginin-2-N-yl)aspartate](n+1) + ADP + phosphate + H(+). Functionally, catalyzes the ATP-dependent polymerization of arginine and aspartate to multi-L-arginyl-poly-L-aspartic acid (cyanophycin; a water-insoluble reserve polymer). The protein is Cyanophycin synthetase (cphA) of Crocosphaera subtropica (strain ATCC 51142 / BH68) (Cyanothece sp. (strain ATCC 51142)).